Reading from the N-terminus, the 322-residue chain is Probable L-asparaginase (322 aa).

The Asparaginase/glutaminase domain maps to P6 to G320. The interval T13–P37 is disordered. The O-isoaspartyl threonine intermediate role is filled by T16. Substrate contacts are provided by residues S54 and T85–D86.

The protein belongs to the asparaginase 1 family.

The protein resides in the cytoplasm. The enzyme catalyses L-asparagine + H2O = L-aspartate + NH4(+). This is Probable L-asparaginase (ansA) from Deinococcus radiodurans (strain ATCC 13939 / DSM 20539 / JCM 16871 / CCUG 27074 / LMG 4051 / NBRC 15346 / NCIMB 9279 / VKM B-1422 / R1).